The following is a 225-amino-acid chain: Phosphoribosylformylglycinamidine synthase subunit PurQ (225 aa).

Residues 4-225 enclose the Glutamine amidotransferase type-1 domain; it reads RIGVITFPGT…LSVLDTLVTA (222 aa). Cys87 serves as the catalytic Nucleophile. Active-site residues include His196 and Glu198.

Part of the FGAM synthase complex composed of 1 PurL, 1 PurQ and 2 PurS subunits.

The protein resides in the cytoplasm. The enzyme catalyses N(2)-formyl-N(1)-(5-phospho-beta-D-ribosyl)glycinamide + L-glutamine + ATP + H2O = 2-formamido-N(1)-(5-O-phospho-beta-D-ribosyl)acetamidine + L-glutamate + ADP + phosphate + H(+). It catalyses the reaction L-glutamine + H2O = L-glutamate + NH4(+). The protein operates within purine metabolism; IMP biosynthesis via de novo pathway; 5-amino-1-(5-phospho-D-ribosyl)imidazole from N(2)-formyl-N(1)-(5-phospho-D-ribosyl)glycinamide: step 1/2. In terms of biological role, part of the phosphoribosylformylglycinamidine synthase complex involved in the purines biosynthetic pathway. Catalyzes the ATP-dependent conversion of formylglycinamide ribonucleotide (FGAR) and glutamine to yield formylglycinamidine ribonucleotide (FGAM) and glutamate. The FGAM synthase complex is composed of three subunits. PurQ produces an ammonia molecule by converting glutamine to glutamate. PurL transfers the ammonia molecule to FGAR to form FGAM in an ATP-dependent manner. PurS interacts with PurQ and PurL and is thought to assist in the transfer of the ammonia molecule from PurQ to PurL. In Nocardia farcinica (strain IFM 10152), this protein is Phosphoribosylformylglycinamidine synthase subunit PurQ.